Reading from the N-terminus, the 326-residue chain is Putative ABC transporter ATP-binding protein MPN_334 (326 aa).

The ABC transporter domain occupies 7–239; it reads VEVKHLEKEF…NFGYRLKVNN (233 aa). 42 to 49 serves as a coordination point for ATP; the sequence is GQNGAGKT.

This sequence belongs to the ABC transporter superfamily.

The sequence is that of Putative ABC transporter ATP-binding protein MPN_334 from Mycoplasma pneumoniae (strain ATCC 29342 / M129 / Subtype 1) (Mycoplasmoides pneumoniae).